A 278-amino-acid polypeptide reads, in one-letter code: Potassium/proton antiporter CemA (278 aa).

Transmembrane regions (helical) follow at residues 60–80 (YLVL…SLVF), 163–183 (ILAF…IAVL), 201–221 (FLII…GWEV), and 239–259 (IFLF…YWIF).

The protein belongs to the CemA family.

It is found in the plastid. Its subcellular location is the chloroplast inner membrane. It catalyses the reaction K(+)(in) + H(+)(out) = K(+)(out) + H(+)(in). Its function is as follows. Contributes to K(+)/H(+) antiport activity by supporting proton efflux to control proton extrusion and homeostasis in chloroplasts in a light-dependent manner to modulate photosynthesis. Prevents excessive induction of non-photochemical quenching (NPQ) under continuous-light conditions. Indirectly promotes efficient inorganic carbon uptake into chloroplasts. This is Potassium/proton antiporter CemA from Guillardia theta (Cryptophyte).